The following is a 207-amino-acid chain: Dephospho-CoA kinase (207 aa).

The DPCK domain maps to 5–203 (AVGLTGGIAC…ARYRALASVF (199 aa)). ATP is bound at residue 13 to 18 (ACGKSL).

The protein belongs to the CoaE family.

It localises to the cytoplasm. It catalyses the reaction 3'-dephospho-CoA + ATP = ADP + CoA + H(+). The protein operates within cofactor biosynthesis; coenzyme A biosynthesis; CoA from (R)-pantothenate: step 5/5. Its function is as follows. Catalyzes the phosphorylation of the 3'-hydroxyl group of dephosphocoenzyme A to form coenzyme A. This is Dephospho-CoA kinase from Xylella fastidiosa (strain 9a5c).